The sequence spans 347 residues: N6-Methyl-AMP deaminase-L (347 aa).

Zn(2+) is bound by residues His19 and His21. N(6)-methyl-AMP contacts are provided by residues His21, Asn23, His69, 101 to 104, Asp142, and Gly175; that span reads STPR. Residue His202 coordinates Zn(2+). Residues Glu205, Asp283, and Asp284 each contribute to the N(6)-methyl-AMP site. Glu205 functions as the Proton donor in the catalytic mechanism. Asp283 provides a ligand contact to Zn(2+).

It belongs to the metallo-dependent hydrolases superfamily. Adenosine and AMP deaminases family. Monomer. Requires Zn(2+) as cofactor.

The catalysed reaction is N(6)-methyl-AMP + H2O + H(+) = IMP + methylamine. Catalyzes the hydrolysis of the free cytosolic methylated adenosine nucleotide N(6)-methyl-AMP (N6-mAMP) to produce inositol monophosphate (IMP) and methylamine. Is required for the catabolism of cytosolic N6-mAMP, which is derived from the degradation of mRNA containing N6-methylated adenine (m6A). In Xenopus laevis (African clawed frog), this protein is N6-Methyl-AMP deaminase-L (mapda.L).